The sequence spans 121 residues: UPF0102 protein XF_0554 (121 aa).

It belongs to the UPF0102 family.

In Xylella fastidiosa (strain 9a5c), this protein is UPF0102 protein XF_0554.